The primary structure comprises 173 residues: Mesogenin-1 (173 aa).

Residues 39 to 68 (ESYSLSQTPSPQSVSPAASYESTYSSSPHT) show a composition bias toward polar residues. 2 disordered regions span residues 39–69 (ESYS…PHTG) and 96–117 (TKKD…ASER). Positions 99–114 (DHGHKTSMTTHRRRKA) are enriched in basic residues. A bHLH domain is found at 109–163 (HRRRKASEREKLRMRAIAEALHTLRNNLPPMYSQGRQPLTKIQTLKCTINYISEL).

The protein resides in the nucleus. Functionally, involved in specifying the paraxial, but not dorsal, mesoderm. May regulate the expression of T-box transcription factors required for mesoderm formation and differentiation, such as brachyury T, wnt8, vegt and eomes. This chain is Mesogenin-1 (msgn1), found in Xenopus laevis (African clawed frog).